Here is a 206-residue protein sequence, read N- to C-terminus: MARYTGPVCKLCRAVGMKLYLKGIRCSSPKCAIERRNFRPGVHGQARQKLSEYAIRLKEKQKARWSYGVLEKQFRRTFSDASRATGNTGAKFLELLERRLDNVVYRLGFATSRAQARQWVNHGHFAVNGRRVSIPSYRVRPGDAITVMPNSAAFVKEALEAASLPQAPKWLEANRETLAATVKALPEREDIDTPVQELLIVEFYSR.

Residues 98 to 176 (RRLDNVVYRL…APKWLEANRE (79 aa)) enclose the S4 RNA-binding domain.

Belongs to the universal ribosomal protein uS4 family. As to quaternary structure, part of the 30S ribosomal subunit. Contacts protein S5. The interaction surface between S4 and S5 is involved in control of translational fidelity.

One of the primary rRNA binding proteins, it binds directly to 16S rRNA where it nucleates assembly of the body of the 30S subunit. Functionally, with S5 and S12 plays an important role in translational accuracy. The chain is Small ribosomal subunit protein uS4 from Gloeobacter violaceus (strain ATCC 29082 / PCC 7421).